A 968-amino-acid chain; its full sequence is Alanine--tRNA ligase, cytoplasmic (968 aa).

At Met-1 the chain carries N-acetylmethionine. ATP-binding positions include Arg-77, His-95, Trp-176, and Ile-214–Asn-216. Residues Asn-216 and Asp-239 each coordinate L-alanine. Residue Gly-243 coordinates ATP. Residues Ser-399 and Ser-555 each carry the phosphoserine modification. Positions 605, 609, 723, and 727 each coordinate Zn(2+). The Nuclear localization signal signature appears at Arg-750–Ala-763. At Lys-876 the chain carries N6-acetyllysine. Lys-943 bears the N6,N6,N6-trimethyllysine; alternate mark. Lys-943 is modified (N6,N6-dimethyllysine; alternate). Lys-943 carries the N6-methyllysine; alternate modification.

The protein belongs to the class-II aminoacyl-tRNA synthetase family. Monomer. Interacts with ANKRD16; the interaction is direct. Requires Zn(2+) as cofactor. ISGylated. Post-translationally, methylation at 'Lys-943' by METTL21C.

It is found in the cytoplasm. It localises to the nucleus. It carries out the reaction tRNA(Ala) + L-alanine + ATP = L-alanyl-tRNA(Ala) + AMP + diphosphate. The enzyme catalyses (S)-lactate + ATP + H(+) = (S)-lactoyl-AMP + diphosphate. The catalysed reaction is (S)-lactoyl-AMP + L-lysyl-[protein] = N(6)-[(S)-lactoyl]-L-lysyl-[protein] + AMP + 2 H(+). With respect to regulation, the protein lactyltransferase activity is inhibited by beta-alanine. Its function is as follows. Catalyzes the attachment of alanine to tRNA(Ala) in a two-step reaction: alanine is first activated by ATP to form Ala-AMP and then transferred to the acceptor end of tRNA(Ala). Also edits incorrectly charged tRNA(Ala) via its editing domain. In presence of high levels of lactate, also acts as a protein lactyltransferase that mediates lactylation of lysine residues in target proteins, such as TEAD1, TP53/p53 and YAP1. Protein lactylation takes place in a two-step reaction: lactate is first activated by ATP to form lactate-AMP and then transferred to lysine residues of target proteins. Acts as an inhibitor of TP53/p53 activity by catalyzing lactylation of TP53/p53. Acts as a positive regulator of the Hippo pathway by mediating lactylation of TEAD1 and YAP1. In Mus musculus (Mouse), this protein is Alanine--tRNA ligase, cytoplasmic.